The chain runs to 668 residues: Endoplasmic reticulum membrane-associated RNA degradation protein (668 aa).

2 helical membrane-spanning segments follow: residues 378–398 and 575–595; these read LLAF…LSVF and VLSL…AVCG.

It localises to the endoplasmic reticulum membrane. May play a role in neuronal migration during embryonic development. The chain is Endoplasmic reticulum membrane-associated RNA degradation protein (ERMARD) from Macaca fascicularis (Crab-eating macaque).